The chain runs to 431 residues: Serine hydroxymethyltransferase 2 (431 aa).

(6S)-5,6,7,8-tetrahydrofolate-binding positions include L131 and G135–L137. K240 bears the N6-(pyridoxal phosphate)lysine mark. (6S)-5,6,7,8-tetrahydrofolate is bound at residue E256.

This sequence belongs to the SHMT family. As to quaternary structure, homodimer. It depends on pyridoxal 5'-phosphate as a cofactor.

Its subcellular location is the cytoplasm. The catalysed reaction is (6R)-5,10-methylene-5,6,7,8-tetrahydrofolate + glycine + H2O = (6S)-5,6,7,8-tetrahydrofolate + L-serine. The protein operates within one-carbon metabolism; tetrahydrofolate interconversion. It functions in the pathway amino-acid biosynthesis; glycine biosynthesis; glycine from L-serine: step 1/1. In terms of biological role, catalyzes the reversible interconversion of serine and glycine with tetrahydrofolate (THF) serving as the one-carbon carrier. This reaction serves as the major source of one-carbon groups required for the biosynthesis of purines, thymidylate, methionine, and other important biomolecules. Also exhibits THF-independent aldolase activity toward beta-hydroxyamino acids, producing glycine and aldehydes, via a retro-aldol mechanism. The sequence is that of Serine hydroxymethyltransferase 2 from Vibrio vulnificus (strain CMCP6).